Here is a 176-residue protein sequence, read N- to C-terminus: Large ribosomal subunit protein uL10 (176 aa).

Belongs to the universal ribosomal protein uL10 family. Part of the ribosomal stalk of the 50S ribosomal subunit. The N-terminus interacts with L11 and the large rRNA to form the base of the stalk. The C-terminus forms an elongated spine to which L12 dimers bind in a sequential fashion forming a multimeric L10(L12)X complex.

Its function is as follows. Forms part of the ribosomal stalk, playing a central role in the interaction of the ribosome with GTP-bound translation factors. This is Large ribosomal subunit protein uL10 from Sorangium cellulosum (strain So ce56) (Polyangium cellulosum (strain So ce56)).